A 61-amino-acid chain; its full sequence is DNA-directed RNA polymerase subunit Rpo10 (61 aa).

The Zn(2+) site is built by cysteine 6, cysteine 9, cysteine 42, and cysteine 43.

Belongs to the archaeal Rpo10/eukaryotic RPB10 RNA polymerase subunit family. Part of the RNA polymerase complex. Zn(2+) serves as cofactor.

It localises to the cytoplasm. It catalyses the reaction RNA(n) + a ribonucleoside 5'-triphosphate = RNA(n+1) + diphosphate. Functionally, DNA-dependent RNA polymerase (RNAP) catalyzes the transcription of DNA into RNA using the four ribonucleoside triphosphates as substrates. This is DNA-directed RNA polymerase subunit Rpo10 from Methanothrix thermoacetophila (strain DSM 6194 / JCM 14653 / NBRC 101360 / PT) (Methanosaeta thermophila).